Here is a 293-residue protein sequence, read N- to C-terminus: MITFSQMLLKLQEFWAKQGCNIVQPYDIPAGAGTFHPATLLRSLDSTPWSTAYVAPSRRPTDGRYGENPNRLGAYYQFQVLIKPSPDNIQDLYLQSLEFLGLDVSKHDIRFVEDNWESPTLGAWGLGWEVWLDGMEVTQFTYFQQVGGLPCSPVAVEITYGTERLAMYLQGVDSVFDIVWNENEFGKTTYADVHKEGEYEFSKYNFEIANTEMLFRHFDDAFNECKSCLGAGLPLPAYDQCMIASHAFNTLDARKAISVTERQNYILKVRELAQGCAVLYKEQESDRLKRVGR.

It belongs to the class-II aminoacyl-tRNA synthetase family. In terms of assembly, tetramer of two alpha and two beta subunits.

Its subcellular location is the cytoplasm. The enzyme catalyses tRNA(Gly) + glycine + ATP = glycyl-tRNA(Gly) + AMP + diphosphate. The protein is Glycine--tRNA ligase alpha subunit of Aliarcobacter butzleri (strain RM4018) (Arcobacter butzleri).